A 315-amino-acid chain; its full sequence is MPVSYDFVILLALFIVLARSHPLPEETAGDASNKCTLSEEDLSNLKSAIYSAASAKSSETAILSNDTLTACPMLSNFTEMLKTVATDMEVLKTQGVSNAEVELLRESFEEKLNELAKNKDIFERQAGQEASKTEGAMVEKINQLQLQMTKLQEEIEQQTKQMYADMIEYVFQRLKTNDTDAIDSYAQILFKAKMHDLFMKLKTDRWVLWNMLNYVEQKKDKLVGKRVLNTVINQVISLNRSNPDELEIGKHSLVNLLCWTSTAKTVYGAVQEDQKMFYLTKLYFPAEKGCTECKDVTSRTLCSNTYPKSIAKAYG.

Positions 1-20 (MPVSYDFVILLALFIVLARS) are cleaved as a signal peptide. Residues 98–161 (NAEVELLRES…QEEIEQQTKQ (64 aa)) are a coiled coil.

Functionally, (Microbial infection) Modulates replication of duck Tembusu virus in salivary glands and virus release into the saliva, probably via the regulation of antimicrobial peptides expression in response to duck Tembusu virus infection. This chain is Salivary protein SG34, found in Aedes albopictus (Asian tiger mosquito).